The sequence spans 409 residues: MQRLAMDLRMLSRELSLYLEHQVRVGFFGSGVGLSLILGFSVAYAFYYLSSIAKKPQLVTGGESFSRFLQDHCPVVTETYYPTVWCWEGRGQTLLRPFITSKPPVQYRNELIKTADGGQISLDWFDNDNSTCYMDASTRPTILLLPGLTGTSKESYILHMIHLSEELGYRCVVFNNRGVAGENLLTPRTYCCANTEDLETVIHHVHSLYPSAPFLAAGVSMGGMLLLNYLGKIGSKTPLMAAATFSVGWNTFACSESLEKPLNWLLFNYYLTTCLQSSVNKHRHMFVKQVDMDHVMKAKSIREFDKRFTSVMFGYQTIDDYYTDASPSPRLKSVGIPVLCLNSVDDVFSPSHAIPIETAKQNPNVALVLTSYGGHIGFLEGIWPRQSTYMDRVFKQFVQAMVEHGHELS.

A helical; Signal-anchor for type II membrane protein transmembrane segment spans residues 26–46 (GFFGSGVGLSLILGFSVAYAF). In terms of domain architecture, AB hydrolase-1 spans 140–233 (PTILLLPGLT…MLLLNYLGKI (94 aa)). Residues Ser220, Asp346, and His375 each act as charge relay system in the active site.

This sequence belongs to the AB hydrolase superfamily. AB hydrolase 4 family.

The protein localises to the membrane. It carries out the reaction a 1,2-diacyl-sn-glycero-3-phosphocholine + H2O = a 1-acyl-sn-glycero-3-phosphocholine + a fatty acid + H(+). It catalyses the reaction a 1,2-diacyl-sn-glycero-3-phosphocholine + H2O = a 2-acyl-sn-glycero-3-phosphocholine + a fatty acid + H(+). The enzyme catalyses 1-tetradecanoyl-2-(9Z,12Z-octadecadienoyl)-sn-glycero-3-phosphocholine + H2O = 2-(9Z,12Z-octadecadienoyl)-sn-glycero-3-phosphocholine + tetradecanoate + H(+). The catalysed reaction is 1-tetradecanoyl-2-(9Z,12Z-octadecadienoyl)-sn-glycero-3-phosphocholine + H2O = 1-tetradecanoyl-sn-glycero-3-phosphocholine + (9Z,12Z)-octadecadienoate + H(+). It carries out the reaction 1-tetradecanoyl-2-(5Z,8Z,11Z,14Z-eicosatetraenoyl)-sn-glycero-3-phosphocholine + H2O = 2-(5Z,8Z,11Z,14Z)-eicosatetraenoyl-sn-glycero-3-phosphocholine + tetradecanoate + H(+). It catalyses the reaction 1-tetradecanoyl-2-(4Z,7Z,10Z,13Z,16Z,19Z-docosahexaenoyl)-sn-glycero-3-phosphocholine + H2O = 2-(4Z,7Z,10Z,13Z,16Z,19Z-docosahexaenoyl)-sn-glycero-3-phosphocholine + tetradecanoate + H(+). The enzyme catalyses 1,2-ditetradecanoyl-sn-glycero-3-phosphocholine + H2O = 2-tetradecanoyl-sn-glycero-3-phosphocholine + tetradecanoate + H(+). The catalysed reaction is 1-octadecanoyl-2-acetyl-sn-glycero-3-phosphocholine + H2O = 1-octadecanoyl-sn-glycero-3-phosphocholine + acetate + H(+). It carries out the reaction 1,2-ditetradecanoyl-sn-glycero-3-phosphocholine + H2O = 1-tetradecanoyl-sn-glycero-3-phosphocholine + tetradecanoate + H(+). It catalyses the reaction 1-octadecanoyl-2-pentanoyl-sn-glycero-3-phosphocholine + H2O = pentanoate + 1-octadecanoyl-sn-glycero-3-phosphocholine + H(+). The enzyme catalyses 1-octadecanoyl-2-hexanoyl-sn-glycero-3-phosphocholine + H2O = hexanoate + 1-octadecanoyl-sn-glycero-3-phosphocholine + H(+). The catalysed reaction is 1-octadecanoyl-2-octanoyl-sn-glycero-3-phosphocholine + H2O = 1-octadecanoyl-sn-glycero-3-phosphocholine + octanoate + H(+). It carries out the reaction 1-octadecanoyl-2-nonanoyl-sn-glycero-3-phosphocholine + H2O = nonanoate + 1-octadecanoyl-sn-glycero-3-phosphocholine + H(+). It catalyses the reaction 1-O-hexadecyl-2-nonadioyl-sn-glycero-3-phosphocholine + H2O = nonanedioate + 1-O-hexadecyl-sn-glycero-3-phosphocholine + H(+). The enzyme catalyses 1-hexadecanoyl-2-nonadioyl-sn-glycero-3-phosphocholine + H2O = nonanedioate + 1-hexadecanoyl-sn-glycero-3-phosphocholine + H(+). The catalysed reaction is 1-hexadecanoyl-2-(9-oxononanoyl)-sn-glycero-3-phosphocholine + H2O = 9-oxononanoate + 1-hexadecanoyl-sn-glycero-3-phosphocholine + H(+). It carries out the reaction 1-hexadecanoyl-2-(5-oxopentanoyl)-sn-glycero-3-phosphocholine + H2O = 5-oxopentanoate + 1-hexadecanoyl-sn-glycero-3-phosphocholine + H(+). It catalyses the reaction 1-hexadecanoyl-2-glutaroyl-sn-glycero-3-phosphocholine + H2O = glutarate + 1-hexadecanoyl-sn-glycero-3-phosphocholine + H(+). The enzyme catalyses 1-O-hexadecyl-2-acetyl-sn-glycero-3-phosphocholine + H2O = 1-O-hexadecyl-sn-glycero-3-phosphocholine + acetate + H(+). Its function is as follows. Phospholipase that may play a role in phospholipids remodeling. May selectively cleave myristate (C14)-containing phosphatidylcholines through its predominant phospholipase 1 activity, cleaving preferentially acyl groups in sn1 position. In parallel, may have a minor phospholipase 2 activity acting on acyl groups in position sn2. In addition to (C14)-containing phosphatidylcholines, may also act on other medium-chain-containing and oxidatively truncated phospholipids. The protein is Phospholipase ABHD3 of Homo sapiens (Human).